A 75-amino-acid polypeptide reads, in one-letter code: Large ribosomal subunit protein bL31 (75 aa).

The protein belongs to the bacterial ribosomal protein bL31 family. Type A subfamily. Part of the 50S ribosomal subunit.

In terms of biological role, binds the 23S rRNA. This chain is Large ribosomal subunit protein bL31, found in Chlorobaculum tepidum (strain ATCC 49652 / DSM 12025 / NBRC 103806 / TLS) (Chlorobium tepidum).